The primary structure comprises 168 residues: Glycine-rich RNA-binding protein 2 (168 aa).

Positions 8-86 (YRCFVGGLAW…RNITVNQAQS (79 aa)) constitute an RRM domain. Residues 148–168 (GYGGGGGYGGNRGDSGGNWRN) are disordered.

Functionally, possibly has a role in RNA transcription or processing during stress. The protein is Glycine-rich RNA-binding protein 2 (GRP2) of Sorghum bicolor (Sorghum).